The sequence spans 529 residues: tRNA pseudouridine synthase Pus10 (529 aa).

2 residues coordinate Zn(2+): Cys-21 and Cys-24. The stretch at 42-89 (KELLNELQKFLETEKDELILEVMNPPPKKIRLQELEDSIDNLSQNGEG) forms a coiled coil. Ser-79 and Ser-84 each carry phosphoserine. The Zn(2+) site is built by Cys-109 and Cys-112. An RNA binding forefinger loop region spans residues 304–317 (TPWIIDGERKLESS). The active-site Nucleophile is the Asp-344. Residues 442–457 (QKTPLRVLHRRPLAVR) are RNA binding thumb loop.

The protein belongs to the pseudouridine synthase Pus10 family. In terms of assembly, interacts with components of the microprocessor complex DROSHA and DGCR8. Proteolytically cleaved during TRAIL-induced cell death. Cleaved, in vitro, either by caspase-3 (CASP3) or caspase-8 (CASP8).

It is found in the nucleus. The protein localises to the cytoplasm. The protein resides in the mitochondrion. The catalysed reaction is uridine(55) in tRNA = pseudouridine(55) in tRNA. The enzyme catalyses uridine(54) in tRNA = pseudouridine(54) in tRNA. In terms of biological role, protein with different functions depending on its subcellular location: involved in miRNA processing in the nucleus and acts as a tRNA pseudouridylate synthase in the cytoplasm. In the cytoplasm, acts as a pseudouridylate synthase by catalyzing synthesis of pseudouridine(54) and pseudouridine(55) from uracil-54 and uracil-55, respectively, in the psi GC loop of a subset of tRNAs. tRNA pseudouridylate synthase activity is enhanced by the presence of 1-methyladenosine at position 53-61 of tRNAs. Does not show tRNA pseudouridylate synthase activity in the nucleus. In the nucleus, promotes primary microRNAs (pri-miRNAs) processing independently of its RNA pseudouridylate synthase activity. Binds pri-miRNAs. Modulator of TRAIL/TNFSF10-induced cell death via activation of procaspase-8 and BID cleavage. Required for the progression of the apoptotic signal through intrinsic mitochondrial cell death. The sequence is that of tRNA pseudouridine synthase Pus10 from Homo sapiens (Human).